The following is a 2533-amino-acid chain: Highly reducing polyketide synthase azaB (2533 aa).

Positions threonine 7–serine 433 constitute a Ketosynthase family 3 (KS3) domain. Residues cysteine 180, histidine 315, and histidine 355 each act as for beta-ketoacyl synthase activity in the active site. Residues tryptophan 554 to methionine 821 are malonyl-CoA:ACP transacylase (MAT) domain. The N-terminal hotdog fold stretch occupies residues serine 946–aspartate 1081. A PKS/mFAS DH domain is found at serine 946 to arginine 1254. The interval aspartate 947–alanine 1251 is dehydratase (DH) domain. The Proton acceptor; for dehydratase activity role is filled by histidine 978. Residues tyrosine 1097–arginine 1254 form a C-terminal hotdog fold region. Aspartate 1163 acts as the Proton donor; for dehydratase activity in catalysis. A methyltransferase (CMet) domain region spans residues threonine 1419 to threonine 1554. Residues glycine 1839–isoleucine 2155 are enoyl reductase (ER) domain. A ketoreductase (KR) domain region spans residues alanine 2178–arginine 2349. Residues aspartate 2455–arginine 2532 enclose the Carrier domain. At serine 2492 the chain carries O-(pantetheine 4'-phosphoryl)serine.

The protein operates within secondary metabolite biosynthesis. In terms of biological role, highly reducing polyketide synthase; part of the gene cluster that mediates the biosynthesis of azaphilones, a class of fungal metabolites characterized by a highly oxygenated pyrano-quinone bicyclic core and exhibiting a broad range of bioactivities. In the first step, the non-reducing polyketide synthase azaA forms the hexaketide precursor from successive condensations of five malonyl-CoA units, presumably with a simple acetyl-CoA starter unit. The reactive polyketide chain then undergoes a PT-mediated C2-C7 cyclization to afford the aromatic ring and is eventually released as an aldehyde through the R-domain. The putative ketoreductase azaE is proposed to catalyze the reduction of the terminal ketone resulting in the early culture product FK17-P2a. The monooxygenase azaH was demonstrated to be the only enzyme required to convert FK17-P2a to azanigerone E. AzaH first hydroxylates the benzaldehyde intermediate FK17-P2a at C4, which triggers the formation of the pyran-ring to afford azanigerone E. In parallel, the 2,4-dimethylhexanoyl chain is synthesized by the HR-PKS azaB and is proposed to be transferred to the C4-hydroxyl of azanigerone E by the acyltransferase azaD directly from the ACP domain of azaB. Alternatively, the 2,4-dimethyl-hexanoyl chain may be offloaded from the HR-PKS as a carboxylic acid and converted to an acyl-CoA by azaF. The resulting acyl-CoA molecule could then be taken up as a substrate by AzaD to form azanigerone B. To yield the carboxylic acid substituent in azanigerone A, the hydroxypropyl side chain of azanigerone B would need to undergo a C-C oxidative cleavage catalyzed by cytochrome P450 AzaI. AzaI is proposed to act on a vicinal diol that leads to a C-C bond scission either through an alkoxyradical intermediate or a peroxy complex. In the biosynthesis of azanigerone A, azanigerone B first undergoes hydroxylation at C10, possibly catalyzed by one of the two FAD-dependent monooxygenases encoded in the cluster, azaG or azaL, resulting in the vicinal diol azanigerone C. Oxidative cleavage of azanigerone C by azaI would yield the corresponding aldehyde derivative of azanigerone A. Finally, the dehydrogenase azaJ is proposed to convert the aldehyde functional group into the carboxylic acid, completing the conversion from azanigerone B to azanigerone A. Alternatively, the oxidation of aldehyde to carboxylic acid may be catalyzed by the same P450 enzyme azaI via consecutive oxidation or by endogenous alcohol dehydrogenase. The protein is Highly reducing polyketide synthase azaB of Aspergillus niger (strain ATCC 1015 / CBS 113.46 / FGSC A1144 / LSHB Ac4 / NCTC 3858a / NRRL 328 / USDA 3528.7).